The following is a 181-amino-acid chain: UPF0302 protein lin2035 (181 aa).

Belongs to the UPF0302 family.

This chain is UPF0302 protein lin2035, found in Listeria innocua serovar 6a (strain ATCC BAA-680 / CLIP 11262).